Consider the following 357-residue polypeptide: Acyl-CoA Delta12-desaturase (357 aa).

A run of 2 helical transmembrane segments spans residues 49-69 (VLWF…IFAS) and 72-92 (IYTT…ITAG). Fe cation-binding residues include His-94, His-99, His-131, His-134, and His-135. A Histidine box-1 motif is present at residues 94–99 (HRLWAH). A Histidine box-2 motif is present at residues 131–135 (HRVHH). Transmembrane regions (helical) follow at residues 195–215 (LVPF…WGET) and 223–245 (STMF…AHMW). His-243, His-272, His-275, and His-276 together coordinate Fe cation. A Histidine box-3 motif is present at residues 272–276 (HNFHH).

It belongs to the fatty acid desaturase type 1 family. Fe(2+) serves as cofactor.

It is found in the membrane. It catalyses the reaction (9Z)-octadecenoyl-CoA + 2 Fe(II)-[cytochrome b5] + O2 + 2 H(+) = (9Z,12Z)-octadecadienoyl-CoA + 2 Fe(III)-[cytochrome b5] + 2 H2O. The catalysed reaction is (9Z)-hexadecenoyl-CoA + 2 Fe(II)-[cytochrome b5] + O2 + 2 H(+) = (9Z,12Z)-hexadecadienoyl-CoA + 2 Fe(III)-[cytochrome b5] + 2 H2O. The enzyme catalyses hexadecanoyl-CoA + 2 Fe(II)-[cytochrome b5] + O2 + 2 H(+) = (9Z)-hexadecenoyl-CoA + 2 Fe(III)-[cytochrome b5] + 2 H2O. Functionally, catalyzes the formation of a Delta12 double bond, acting on monounsaturated fatty acyl substrates like palmitoleoyl-CoA ((9Z)-hexadecenoyl-CoA) and oleoyl-CoA ((9Z)-octadecenoyl-CoA) with higher desaturation activity on (9Z)-octadecenoyl-CoA than (9Z)-hexadecenoyl-CoA. Requires preexisting cis double bond at the Delta9 position of fatty acyls to be able to insert the Delta12 double bond. Delta12-desaturation of (9Z)-octadecenoyl-CoA in insects produces (9Z,12Z)-octadecadienoyl-CoA (linoleoyl-CoA) which may be used to supply precursors of crucial mediators of immunity and reproduction and other essential functions. Can also catalyze Delta9-desaturation on saturated fatty acyl substrates like palmitoyl-CoA (hexadecanoyl-CoA) but with lower efficiency. The sequence is that of Acyl-CoA Delta12-desaturase from Acheta domesticus (House cricket).